A 127-amino-acid chain; its full sequence is Small ribosomal subunit protein uS11 (127 aa).

The protein belongs to the universal ribosomal protein uS11 family. In terms of assembly, part of the 30S ribosomal subunit. Interacts with proteins S7 and S18. Binds to IF-3.

Functionally, located on the platform of the 30S subunit, it bridges several disparate RNA helices of the 16S rRNA. Forms part of the Shine-Dalgarno cleft in the 70S ribosome. This Chlorobium chlorochromatii (strain CaD3) protein is Small ribosomal subunit protein uS11.